We begin with the raw amino-acid sequence, 366 residues long: Peptide chain release factor 2 (366 aa).

Gln-249 is modified (N5-methylglutamine).

This sequence belongs to the prokaryotic/mitochondrial release factor family. Methylated by PrmC. Methylation increases the termination efficiency of RF2.

It is found in the cytoplasm. Peptide chain release factor 2 directs the termination of translation in response to the peptide chain termination codons UGA and UAA. The protein is Peptide chain release factor 2 of Petrotoga mobilis (strain DSM 10674 / SJ95).